Reading from the N-terminus, the 371-residue chain is Maltose/maltodextrin import ATP-binding protein MalK (371 aa).

The 231-residue stretch at 4-234 folds into the ABC transporter domain; the sequence is VQLQNVTKAW…PADRFVAGFI (231 aa). 36–43 provides a ligand contact to ATP; that stretch reads GPSGCGKS.

It belongs to the ABC transporter superfamily. Maltooligosaccharide importer (TC 3.A.1.1.1) family. As to quaternary structure, the complex is composed of two ATP-binding proteins (MalK), two transmembrane proteins (MalG and MalK) and a solute-binding protein (MalE).

Its subcellular location is the cell inner membrane. It carries out the reaction D-maltose(out) + ATP + H2O = D-maltose(in) + ADP + phosphate + H(+). Its function is as follows. Part of the ABC transporter complex MalEFGK involved in maltose/maltodextrin import. Responsible for energy coupling to the transport system. The polypeptide is Maltose/maltodextrin import ATP-binding protein MalK (Escherichia coli O157:H7).